Here is a 132-residue protein sequence, read N- to C-terminus: Galectin-2 (132 aa).

The region spanning 4-131 (ELEVKNMDMK…GFNMSSFKLK (128 aa)) is the Galectin domain. 65-71 (WGQEQRE) provides a ligand contact to a beta-D-galactoside.

In terms of assembly, homodimer.

This protein binds beta-galactoside. Its physiological function is not yet known. This chain is Galectin-2 (LGALS2), found in Homo sapiens (Human).